Reading from the N-terminus, the 610-residue chain is tRNA uridine 5-carboxymethylaminomethyl modification enzyme MnmG (610 aa).

14–19 (GAGHAG) lines the FAD pocket. 274–288 (GPRYCPSIEDKIVKF) serves as a coordination point for NAD(+).

It belongs to the MnmG family. As to quaternary structure, homodimer. Heterotetramer of two MnmE and two MnmG subunits. FAD is required as a cofactor.

The protein localises to the cytoplasm. In terms of biological role, NAD-binding protein involved in the addition of a carboxymethylaminomethyl (cmnm) group at the wobble position (U34) of certain tRNAs, forming tRNA-cmnm(5)s(2)U34. The sequence is that of tRNA uridine 5-carboxymethylaminomethyl modification enzyme MnmG from Chlamydia trachomatis serovar L2b (strain UCH-1/proctitis).